The chain runs to 143 residues: MAVQRTFSIIKPDAVAKNVIGEITTRFEKAGLRVVASKMVQLSEREAAGFYAEHSERGFFKDLVAFMTSGPVIVQVLEGEDAVLKNRELMGATNPKEAAPGTIRADFAVSIDENAVHGSDSEASAAREIAYFFSATELCARIR.

Residues Lys-11, Phe-59, Arg-87, Thr-93, Arg-104, and Asn-114 each coordinate ATP. His-117 serves as the catalytic Pros-phosphohistidine intermediate.

The protein belongs to the NDK family. In terms of assembly, homotetramer. The cofactor is Mg(2+).

Its subcellular location is the cytoplasm. The catalysed reaction is a 2'-deoxyribonucleoside 5'-diphosphate + ATP = a 2'-deoxyribonucleoside 5'-triphosphate + ADP. The enzyme catalyses a ribonucleoside 5'-diphosphate + ATP = a ribonucleoside 5'-triphosphate + ADP. Functionally, major role in the synthesis of nucleoside triphosphates other than ATP. The ATP gamma phosphate is transferred to the NDP beta phosphate via a ping-pong mechanism, using a phosphorylated active-site intermediate. This is Nucleoside diphosphate kinase from Ectopseudomonas mendocina (strain ymp) (Pseudomonas mendocina).